A 122-amino-acid chain; its full sequence is Protein MGF 110-6L (122 aa).

The signal sequence occupies residues 1–18 (MLVIFLGILGLMASQVLG). N100 carries an N-linked (GlcNAc...) asparagine; by host glycan. Residues 119 to 122 (KDEL) carry the Prevents secretion from ER motif.

This sequence belongs to the asfivirus MGF 110 family. N-glycosylated.

Its subcellular location is the host endoplasmic reticulum lumen. Plays a role in virus cell tropism, and may be required for efficient virus replication in macrophages. This Ornithodoros (relapsing fever ticks) protein is Protein MGF 110-6L.